The following is a 635-amino-acid chain: Biosynthetic arginine decarboxylase (635 aa).

Lys100 carries the N6-(pyridoxal phosphate)lysine modification. 282-292 (LDIGGGLGVDY) provides a ligand contact to substrate.

It belongs to the Orn/Lys/Arg decarboxylase class-II family. SpeA subfamily. It depends on Mg(2+) as a cofactor. Pyridoxal 5'-phosphate is required as a cofactor.

It catalyses the reaction L-arginine + H(+) = agmatine + CO2. It functions in the pathway amine and polyamine biosynthesis; agmatine biosynthesis; agmatine from L-arginine: step 1/1. Catalyzes the biosynthesis of agmatine from arginine. This Geotalea uraniireducens (strain Rf4) (Geobacter uraniireducens) protein is Biosynthetic arginine decarboxylase.